Reading from the N-terminus, the 558-residue chain is Pyrethroid hydrolase Ces2a (558 aa).

A signal peptide spans 1–26 (MPLARLPGWLCVVACGLLLLLQHVHG). An intrachain disulfide couples C95 to C122. K209 is subject to N6-succinyllysine. S227 (acyl-ester intermediate) is an active-site residue. N-linked (GlcNAc...) asparagine glycosylation occurs at N275. C279 and C290 are joined by a disulfide. K296 bears the N6-succinyllysine mark. E344 acts as the Charge relay system in catalysis. A glycan (N-linked (GlcNAc...) asparagine) is linked at N361. The active-site Charge relay system is H456.

The protein belongs to the type-B carboxylesterase/lipase family.

Its subcellular location is the microsome. The catalysed reaction is (-)-trans-permethrin + H2O = (3-phenoxyphenyl)methanol + (1S,3R)-3-(2,2-dichlorovinyl)-2,2-dimethylcyclopropanecarboxylate + H(+). The enzyme catalyses all-trans-retinyl hexadecanoate + H2O = all-trans-retinol + hexadecanoate + H(+). Functionally, carboxylesterases that catalyzes the hydrolysis of pyrethroids pesticides. Hydrolyzes permethrin faster than cypermethrin. Hydrolyzes retinyl esters. This is Pyrethroid hydrolase Ces2a from Mus musculus (Mouse).